Consider the following 242-residue polypeptide: ATP synthase subunit a (242 aa).

The next 6 helical transmembrane spans lie at 31 to 51, 84 to 104, 114 to 134, 140 to 160, 189 to 209, and 210 to 230; these read IYML…FYNW, FIPL…LGMT, IIVT…VGFV, FLTL…MIVI, VIAS…IPLM, and VILI…FTIL.

Belongs to the ATPase A chain family. As to quaternary structure, F-type ATPases have 2 components, CF(1) - the catalytic core - and CF(0) - the membrane proton channel. CF(1) has five subunits: alpha(3), beta(3), gamma(1), delta(1), epsilon(1). CF(0) has three main subunits: a(1), b(2) and c(9-12). The alpha and beta chains form an alternating ring which encloses part of the gamma chain. CF(1) is attached to CF(0) by a central stalk formed by the gamma and epsilon chains, while a peripheral stalk is formed by the delta and b chains.

The protein localises to the cell inner membrane. Key component of the proton channel; it plays a direct role in the translocation of protons across the membrane. This is ATP synthase subunit a from Rickettsia canadensis (strain McKiel).